Consider the following 232-residue polypeptide: Adenosylcobinamide-GDP ribazoletransferase (232 aa).

Transmembrane regions (helical) follow at residues Leu-24–Leu-44, Ile-46–Leu-66, Ile-96–Leu-116, Pro-117–Ala-137, Gly-153–Val-173, Val-174–Ile-194, and Gly-210–Phe-230.

It belongs to the CobS family. Mg(2+) serves as cofactor.

The protein resides in the cell membrane. It catalyses the reaction alpha-ribazole + adenosylcob(III)inamide-GDP = adenosylcob(III)alamin + GMP + H(+). The catalysed reaction is alpha-ribazole 5'-phosphate + adenosylcob(III)inamide-GDP = adenosylcob(III)alamin 5'-phosphate + GMP + H(+). It participates in cofactor biosynthesis; adenosylcobalamin biosynthesis; adenosylcobalamin from cob(II)yrinate a,c-diamide: step 7/7. Functionally, joins adenosylcobinamide-GDP and alpha-ribazole to generate adenosylcobalamin (Ado-cobalamin). Also synthesizes adenosylcobalamin 5'-phosphate from adenosylcobinamide-GDP and alpha-ribazole 5'-phosphate. This is Adenosylcobinamide-GDP ribazoletransferase from Pyrococcus abyssi (strain GE5 / Orsay).